A 286-amino-acid polypeptide reads, in one-letter code: Polygalacturonan/rhamnogalacturonan transport system permease protein YtcP (286 aa).

Transmembrane regions (helical) follow at residues 9 to 29 (LIYG…IHVI), 69 to 89 (LLVS…LSSL), 106 to 126 (MFLV…FLVV), 131 to 151 (LLDS…NLII), 176 to 196 (GIFF…ISLF), and 251 to 271 (TIKM…YPFI). One can recognise an ABC transmembrane type-1 domain in the interval 69-271 (LLVSVFVTVI…IPVLLVYPFI (203 aa)).

The protein belongs to the binding-protein-dependent transport system permease family. CysTW subfamily. The complex is probably composed of two ATP-binding proteins (MsmX), two transmembrane proteins (YtcP and YteP) and a solute-binding protein (YtcQ).

It is found in the cell membrane. Its function is as follows. Involved in pectin degradation. Part of the ABC transporter complex YtcQP-YteP involved in the uptake of polygalacturonan and rhamnogalacturonan type I. Responsible for the translocation of the substrate across the membrane. The protein is Polygalacturonan/rhamnogalacturonan transport system permease protein YtcP (ytcP) of Bacillus subtilis (strain 168).